The sequence spans 204 residues: Sec-independent protein translocase protein TatB (204 aa).

Residues 1 to 21 (MFDIGFSELLLIFIVGLVVLG) traverse the membrane as a helical segment. The segment covering 154–166 (VVSSVDSIQNGQS) has biased composition (polar residues). Positions 154–204 (VVSSVDSIQNGQSDLELDAQAEVDRQLAAMMDKYAPPDDVAENPISTEKTS) are disordered.

Belongs to the TatB family. As to quaternary structure, the Tat system comprises two distinct complexes: a TatABC complex, containing multiple copies of TatA, TatB and TatC subunits, and a separate TatA complex, containing only TatA subunits. Substrates initially bind to the TatABC complex, which probably triggers association of the separate TatA complex to form the active translocon.

It is found in the cell inner membrane. Its function is as follows. Part of the twin-arginine translocation (Tat) system that transports large folded proteins containing a characteristic twin-arginine motif in their signal peptide across membranes. Together with TatC, TatB is part of a receptor directly interacting with Tat signal peptides. TatB may form an oligomeric binding site that transiently accommodates folded Tat precursor proteins before their translocation. The sequence is that of Sec-independent protein translocase protein TatB from Mannheimia succiniciproducens (strain KCTC 0769BP / MBEL55E).